The sequence spans 1594 residues: Transcription factor Gibbin (1594 aa).

Disordered stretches follow at residues Pro19 to Asp111, Leu149 to Ala241, Gln256 to Gly307, and Cys367 to Lys464. A compositionally biased stretch (pro residues) spans Gly30–Pro47. Lys79 is modified (N6-acetyllysine). The span at Ser165–Arg177 shows a compositional bias: polar residues. The segment covering Ser178–Ser193 has biased composition (basic and acidic residues). Over residues Pro228–Asp240 the composition is skewed to acidic residues. Position 267 is a phosphoserine (Ser267). Residues Pro272–Ala303 show a composition bias toward low complexity. Over residues Ile391–Gly401 the composition is skewed to basic residues. The a.T hook 1 DNA-binding region spans Arg395 to Gly407. A compositionally biased stretch (pro residues) spans Glu427–Glu447. Residues Lys541–Leu553 constitute a DNA-binding region (a.T hook 2). The tract at residues Met578–Asp604 is disordered. Residue Ser593 is modified to Phosphoserine. Residue Lys606 forms a Glycyl lysine isopeptide (Lys-Gly) (interchain with G-Cter in SUMO2) linkage. Positions Leu714–Gly789 are disordered. Residues Lys734–Lys743 show a composition bias toward basic residues. Residues Ser825 and Ser842 each carry the phosphoserine modification. Arg887 is modified (omega-N-methylarginine). Residue Ser892 is modified to Phosphoserine. The segment at Lys942 to Tyr967 is disordered. The residue at position 1060 (Ser1060) is a Phosphoserine. 2 disordered regions span residues Val1152–Leu1191 and Ser1245–Gly1306. Low complexity-rich tracts occupy residues Ser1153 to Gln1168, Ser1180 to Leu1191, and Ser1245 to Pro1264. The residue at position 1180 (Ser1180) is a Phosphoserine. Ser1315, Ser1317, and Ser1392 each carry phosphoserine. Thr1394 bears the Phosphothreonine mark. At Ser1396 the chain carries Phosphoserine. Lys1402 participates in a covalent cross-link: Glycyl lysine isopeptide (Lys-Gly) (interchain with G-Cter in SUMO2). Residues His1495–Ala1525 form a disordered region. 2 positions are modified to phosphoserine: Ser1498 and Ser1540.

The protein resides in the nucleus. The protein localises to the chromosome. Functionally, transcription factor required for the proper patterning of the epidermis, which plays a key role in early epithelial morphogenesis. Directly binds promoter and enhancer regions and acts by maintaining local enhancer-promoter chromatin architecture. Interacts with many sequence-specific zinc-finger transcription factors and methyl-CpG-binding proteins to regulate the expression of mesoderm genes that wire surface ectoderm stratification. The sequence is that of Transcription factor Gibbin from Mus musculus (Mouse).